Consider the following 67-residue polypeptide: Phycobilisome 7.8 kDa linker polypeptide, allophycocyanin-associated, core (67 aa).

The 56-residue stretch at Met1–Ala56 folds into the CpcD-like domain.

It belongs to the phycobilisome linker protein family.

The protein localises to the cellular thylakoid membrane. Its function is as follows. Rod linker protein, associated with allophycocyanin. Linker polypeptides determine the state of aggregation and the location of the disk-shaped phycobiliprotein units within the phycobilisome and modulate their spectroscopic properties in order to mediate a directed and optimal energy transfer. In Synechocystis sp. (strain PCC 6714) (Aphanocapsa sp. (strain PCC 6714)), this protein is Phycobilisome 7.8 kDa linker polypeptide, allophycocyanin-associated, core (apcC).